We begin with the raw amino-acid sequence, 51 residues long: Insulin (51 aa).

3 disulfides stabilise this stretch: cysteine 7–cysteine 37, cysteine 19–cysteine 50, and cysteine 36–cysteine 41.

The protein belongs to the insulin family. Heterodimer of a B chain and an A chain linked by two disulfide bonds.

It is found in the secreted. Its function is as follows. Insulin decreases blood glucose concentration. It increases cell permeability to monosaccharides, amino acids and fatty acids. It accelerates glycolysis, the pentose phosphate cycle, and glycogen synthesis in liver. This Anguilla rostrata (American eel) protein is Insulin (ins).